Reading from the N-terminus, the 712-residue chain is TGF-beta-activated kinase 1 and MAP3K7-binding protein 3 (712 aa).

The residue at position 2 (A2) is an N-acetylalanine. The region spanning L8–S51 is the CUE domain. S60, S101, and S103 each carry phosphoserine. 4 disordered regions span residues F141–R189, P227–S345, T369–V447, and E475–S509. The span at M163 to Q173 shows a compositional bias: polar residues. 2 stretches are compositionally biased toward low complexity: residues R233–P249 and Y269–S290. Pro residues predominate over residues P322–P332. Composition is skewed to polar residues over residues G336–S345 and E371–T404. Position 385 is a phosphoserine (S385). T404 is subject to Phosphothreonine. Low complexity predominate over residues P405–Q417. A phosphoserine mark is found at S409 and S492. The residue at position 506 (S506) is a Phosphoserine; by MAPKAPK2 and MAPKAPK3. Residues A517–L559 are a coiled coil. Residues M609–T636 are disordered. A compositionally biased stretch (basic and acidic residues) spans S627–T636. Residue K649 forms a Glycyl lysine isopeptide (Lys-Gly) (interchain with G-Cter in ubiquitin) linkage. The segment covering Q658–T667 has biased composition (basic and acidic residues). A disordered region spans residues Q658–Y682. The RanBP2-type zinc-finger motif lies at Y682–T712. Residue C692 is modified to (Microbial infection) S-methylcysteine.

Interacts with TAB1, TAB2, MAP3K7, TRAF2 and TRAF6. The minimal TAB3-containing complex (TAB1-MAP3K7-TAB3) appears not to contain TAB2. However, it seems sensible to consider that TAB2 may also join this complex and may act in a cooperative manner with TAB3. Interacts with DYNC2I2 (via the WD domains). Interacts with RBCK1. Binds 'Lys-63'-linked polyubiquitin chains. Interacts with TRIM5. Interacts with TRIM38 (via B30.2/SPRY domain), leading to its translocation to lysosomes and degradation. Interacts with ASB1. In terms of assembly, (Microbial infection) Interacts with M.tuberculosis PtpA, which blocks the NF-kappa-B signaling pathway. Ubiquitinated; following IL1 stimulation or TRAF6 overexpression. Ubiquitinated by AMFR via 'Lys-27'-linked polyubiquitination; leading to TAK1/MAP3K7 activation. Post-translationally, degraded in a lysosome-dependent manner following interaction with TRIM38. In terms of processing, phosphorylated at Ser-506 by MAPKAPK2 and MAPKAPK3 following IL1 treatment. (Microbial infection) Methylated at Cys-692 by enteropathogenic E.coli protein NleE or S.flexneri protein OspZ: methylation disrupts zinc-binding and ability to bind 'Lys-63'-linked ubiquitin, leading to NF-kappa-B inactivation. As to expression, widely expressed. Constitutively overexpressed in certain tumor tissues. Major transcript. In terms of tissue distribution, minor transcript.

Its function is as follows. Adapter required to activate the JNK and NF-kappa-B signaling pathways through the specific recognition of 'Lys-63'-linked polyubiquitin chains by its RanBP2-type zinc finger (NZF). Acts as an adapter linking MAP3K7/TAK1 and TRAF6 to 'Lys-63'-linked polyubiquitin chains. The RanBP2-type zinc finger (NZF) specifically recognizes Lys-63'-linked polyubiquitin chains unanchored or anchored to the substrate proteins such as RIPK1/RIP1 and RIPK2: this acts as a scaffold to organize a large signaling complex to promote autophosphorylation of MAP3K7/TAK1, and subsequent activation of I-kappa-B-kinase (IKK) core complex by MAP3K7/TAK1. May be an oncogenic factor. In Homo sapiens (Human), this protein is TGF-beta-activated kinase 1 and MAP3K7-binding protein 3.